Here is a 211-residue protein sequence, read N- to C-terminus: MTDNNIFGNTKRFNDSIELINKLETPRFQKILTRVVNKIGHRNERIFTESEENILQNLFKITSLEFKGILECCSFIFEQTAYYSLSPNNLVNQLKKTMLNDDKTSCFQSVWEDNSEHVLNFLRTQSIAPLQLNEIGWRLHYQMSSSKTIKRNASAIMELNFNNNNNNNNNNNNNNNNNINNDKMILEFNKEQLLEFYNKLESIQEKLDTLA.

Positions 131-211 constitute a COMM domain; the sequence is QLNEIGWRLH…SIQEKLDTLA (81 aa).

The protein belongs to the COMM domain-containing protein 10 family. In terms of assembly, component of the commander complex consisting of the CCC subcomplex and the retriever subcomplex. Component of the CCC subcomplex.

Scaffold protein in the commander complex that is essential for endosomal recycling of transmembrane cargos; the commander complex is composed of the CCC subcomplex and the retriever subcomplex. This Dictyostelium discoideum (Social amoeba) protein is COMM domain-containing protein 10 (commd10).